Here is a 96-residue protein sequence, read N- to C-terminus: Copper-sensing transcriptional repressor RicR (96 aa).

T2 bears the N-acetylthreonine mark. Positions 38, 63, and 67 each coordinate Cu cation.

It belongs to the CsoR family.

Its subcellular location is the cytoplasm. In terms of biological role, under low copper conditions, represses the expression of lpqS, Rv2963, mymT, socA, socB, mmcO and its own expression. In the presence of copper, RicR dissociates from DNA, leading to the expression of the target genes. Members of the RicR regulon are important for copper resistance during infections and full virulence in a mouse model of infection. In Mycobacterium tuberculosis (strain ATCC 25618 / H37Rv), this protein is Copper-sensing transcriptional repressor RicR.